The following is a 716-amino-acid chain: Delta-1-pyrroline-5-carboxylate synthase 1 (716 aa).

The tract at residues 1–296 (MASVDPSRSF…WESSKDVSTR (296 aa)) is glutamate 5-kinase. The substrate site is built by Ser60, Asp157, and Asn176. ATP contacts are provided by residues 196–197 (SD), 202–207 (YSGPPS), and 236–242 (RGGMTAK). A gamma-glutamyl phosphate reductase region spans residues 297–716 (EMAVAARDCS…VYTHKSLPLQ (420 aa)).

It in the N-terminal section; belongs to the glutamate 5-kinase family. In the C-terminal section; belongs to the gamma-glutamyl phosphate reductase family. As to expression, expressed at high levels in leaves.

It catalyses the reaction L-glutamate + ATP = L-glutamyl 5-phosphate + ADP. The enzyme catalyses L-glutamate 5-semialdehyde + phosphate + NADP(+) = L-glutamyl 5-phosphate + NADPH + H(+). Its pathway is amino-acid biosynthesis; L-proline biosynthesis; L-glutamate 5-semialdehyde from L-glutamate: step 1/2. It participates in amino-acid biosynthesis; L-proline biosynthesis; L-glutamate 5-semialdehyde from L-glutamate: step 2/2. With respect to regulation, feedback regulated by proline. Functionally, P5CS plays a key role in proline biosynthesis, leading to osmoregulation in plants. Involved in abiotic stress tolerance. The protein is Delta-1-pyrroline-5-carboxylate synthase 1 of Oryza sativa subsp. japonica (Rice).